The sequence spans 338 residues: Egl nine homolog 1 (338 aa).

The segment covering 1–11 has biased composition (low complexity); that stretch reads PRAQPAPAQPR. Positions 1-99 are disordered; sequence PRAQPAPAQP…PSGGLRPNGQ (99 aa). Phosphoserine is present on Ser-52. S-nitrosocysteine occurs at positions 116 and 123. The tract at residues 156-166 is beta(2)beta(3) 'finger-like' loop; sequence VSQKSDSSKDI. One can recognise a Fe2OG dioxygenase domain in the interval 209 to 307; the sequence is GRTKAMVACY…RYAITVWYFD (99 aa). Cys-217 bears the S-nitrosocysteine mark. Positions 228 and 230 each coordinate Fe cation. Cys-238 and Cys-241 each carry S-nitrosocysteine. His-289 provides a ligand contact to Fe cation. Arg-298 serves as a coordination point for 2-oxoglutarate.

In terms of assembly, monomer. Interacts with ING4; the interaction inhibits the hydroxylation of HIF alpha proteins. Interacts with PTGES3 (via PXLE motif); thereby recruiting EGLN1 to the HSP90 pathway to facilitate HIF alpha proteins hydroxylation. Interacts with LIMD1. Found in a complex composed of LIMD1, VHL, EGLN1/PHD2, ELOB and CUL2. Interacts with EPAS1. Interacts with CBFA2T3 and HIF1A. Requires Fe(2+) as cofactor. L-ascorbate serves as cofactor. In terms of processing, S-nitrosylation inhibits the enzyme activity up to 60% under aerobic conditions. Chelation of Fe(2+) has no effect on the S-nitrosylation. It is uncertain whether nitrosylation occurs on Cys-238 or Cys-241. In terms of tissue distribution, expressed in heart, liver, kidney, brain, liver and testis. Highest levels in heart, lowest in liver.

It is found in the cytoplasm. Its subcellular location is the nucleus. The enzyme catalyses L-prolyl-[hypoxia-inducible factor alpha subunit] + 2-oxoglutarate + O2 = trans-4-hydroxy-L-prolyl-[hypoxia-inducible factor alpha subunit] + succinate + CO2. Its activity is regulated as follows. Increased activation in hypoxia. Hydroxylation of the C-terminal ODD domain (CODD) proline of HIF1A is activated by cyclosporin A (CsA). Its function is as follows. Cellular oxygen sensor that catalyzes, under normoxic conditions, the post-translational formation of 4-hydroxyproline in hypoxia-inducible factor (HIF) alpha proteins. Hydroxylates a specific proline found in each of the oxygen-dependent degradation (ODD) domains (N-terminal, NODD, and C-terminal, CODD) of HIF1A. Also hydroxylates HIF2A. Has a preference for the CODD site for both HIF1A and HIF1B. Hydroxylated HIFs are then targeted for proteasomal degradation via the von Hippel-Lindau ubiquitination complex. Under hypoxic conditions, the hydroxylation reaction is attenuated allowing HIFs to escape degradation resulting in their translocation to the nucleus, heterodimerization with HIF1B, and increased expression of hypoxy-inducible genes. EGLN1 is the most important isozyme under normoxia and, through regulating the stability of HIF1, involved in various hypoxia-influenced processes such as angiogenesis in retinal and cardiac functionality. Target proteins are preferentially recognized via a LXXLAP motif. This chain is Egl nine homolog 1 (Egln1), found in Rattus norvegicus (Rat).